Here is a 249-residue protein sequence, read N- to C-terminus: Acetylglutamate kinase (249 aa).

Substrate contacts are provided by residues 38–39 (GG), arginine 60, and asparagine 147.

This sequence belongs to the acetylglutamate kinase family. ArgB subfamily.

The protein localises to the cytoplasm. The enzyme catalyses N-acetyl-L-glutamate + ATP = N-acetyl-L-glutamyl 5-phosphate + ADP. It functions in the pathway amino-acid biosynthesis; L-arginine biosynthesis; N(2)-acetyl-L-ornithine from L-glutamate: step 2/4. Functionally, catalyzes the ATP-dependent phosphorylation of N-acetyl-L-glutamate. In Deinococcus geothermalis (strain DSM 11300 / CIP 105573 / AG-3a), this protein is Acetylglutamate kinase.